A 510-amino-acid polypeptide reads, in one-letter code: Maturase K (510 aa).

This sequence belongs to the intron maturase 2 family. MatK subfamily.

The protein localises to the plastid. It is found in the chloroplast. In terms of biological role, usually encoded in the trnK tRNA gene intron. Probably assists in splicing its own and other chloroplast group II introns. This is Maturase K from Penstemon heterophyllus (Foothill penstemon).